A 249-amino-acid polypeptide reads, in one-letter code: Triosephosphate isomerase (249 aa).

Substrate is bound at residue 9–11; it reads NWK. Catalysis depends on histidine 94, which acts as the Electrophile. Glutamate 166 acts as the Proton acceptor in catalysis. Substrate is bound by residues glycine 172 and 232-233; that span reads GG.

The protein belongs to the triosephosphate isomerase family. Homodimer.

It localises to the cytoplasm. It carries out the reaction D-glyceraldehyde 3-phosphate = dihydroxyacetone phosphate. It functions in the pathway carbohydrate biosynthesis; gluconeogenesis. The protein operates within carbohydrate degradation; glycolysis; D-glyceraldehyde 3-phosphate from glycerone phosphate: step 1/1. Its function is as follows. Involved in the gluconeogenesis. Catalyzes stereospecifically the conversion of dihydroxyacetone phosphate (DHAP) to D-glyceraldehyde-3-phosphate (G3P). This is Triosephosphate isomerase from Xylella fastidiosa (strain M12).